Reading from the N-terminus, the 281-residue chain is Light-independent protochlorophyllide reductase iron-sulfur ATP-binding protein (281 aa).

Residues 10–15 (GIGKST) and lysine 39 contribute to the ATP site. Mg(2+) is bound at residue serine 14. [4Fe-4S] cluster-binding residues include cysteine 95 and cysteine 129. ATP is bound at residue 180–181 (NR).

Belongs to the NifH/BchL/ChlL family. Homodimer. Protochlorophyllide reductase is composed of three subunits; ChlL, ChlN and ChlB. [4Fe-4S] cluster is required as a cofactor.

The enzyme catalyses chlorophyllide a + oxidized 2[4Fe-4S]-[ferredoxin] + 2 ADP + 2 phosphate = protochlorophyllide a + reduced 2[4Fe-4S]-[ferredoxin] + 2 ATP + 2 H2O. Its pathway is porphyrin-containing compound metabolism; chlorophyll biosynthesis (light-independent). Its function is as follows. Component of the dark-operative protochlorophyllide reductase (DPOR) that uses Mg-ATP and reduced ferredoxin to reduce ring D of protochlorophyllide (Pchlide) to form chlorophyllide a (Chlide). This reaction is light-independent. The L component serves as a unique electron donor to the NB-component of the complex, and binds Mg-ATP. The sequence is that of Light-independent protochlorophyllide reductase iron-sulfur ATP-binding protein from Thermosynechococcus vestitus (strain NIES-2133 / IAM M-273 / BP-1).